The primary structure comprises 399 residues: 1-deoxy-D-xylulose 5-phosphate reductoisomerase (399 aa).

Threonine 13, glycine 14, serine 15, isoleucine 16, and asparagine 127 together coordinate NADPH. Lysine 128 serves as a coordination point for 1-deoxy-D-xylulose 5-phosphate. Residue glutamate 129 coordinates NADPH. Mn(2+) is bound at residue aspartate 153. 1-deoxy-D-xylulose 5-phosphate is bound by residues serine 154, glutamate 155, serine 187, and histidine 210. Residue glutamate 155 participates in Mn(2+) binding. Position 216 (glycine 216) interacts with NADPH. The 1-deoxy-D-xylulose 5-phosphate site is built by serine 223, asparagine 228, lysine 229, and glutamate 232. Glutamate 232 serves as a coordination point for Mn(2+).

Belongs to the DXR family. It depends on Mg(2+) as a cofactor. Mn(2+) is required as a cofactor.

The enzyme catalyses 2-C-methyl-D-erythritol 4-phosphate + NADP(+) = 1-deoxy-D-xylulose 5-phosphate + NADPH + H(+). It participates in isoprenoid biosynthesis; isopentenyl diphosphate biosynthesis via DXP pathway; isopentenyl diphosphate from 1-deoxy-D-xylulose 5-phosphate: step 1/6. Functionally, catalyzes the NADPH-dependent rearrangement and reduction of 1-deoxy-D-xylulose-5-phosphate (DXP) to 2-C-methyl-D-erythritol 4-phosphate (MEP). This chain is 1-deoxy-D-xylulose 5-phosphate reductoisomerase, found in Bordetella avium (strain 197N).